Consider the following 245-residue polypeptide: tRNA (guanine-N(1)-)-methyltransferase (245 aa).

Gly-114 lines the S-adenosyl-L-methionine pocket.

It belongs to the RNA methyltransferase TrmD family. In terms of assembly, homodimer.

It localises to the cytoplasm. It catalyses the reaction guanosine(37) in tRNA + S-adenosyl-L-methionine = N(1)-methylguanosine(37) in tRNA + S-adenosyl-L-homocysteine + H(+). Functionally, specifically methylates guanosine-37 in various tRNAs. The sequence is that of tRNA (guanine-N(1)-)-methyltransferase from Sphingopyxis alaskensis (strain DSM 13593 / LMG 18877 / RB2256) (Sphingomonas alaskensis).